The chain runs to 236 residues: Probable 2-phosphosulfolactate phosphatase (236 aa).

This sequence belongs to the ComB family. It depends on Mg(2+) as a cofactor.

It catalyses the reaction (2R)-O-phospho-3-sulfolactate + H2O = (2R)-3-sulfolactate + phosphate. This chain is Probable 2-phosphosulfolactate phosphatase, found in Gloeobacter violaceus (strain ATCC 29082 / PCC 7421).